The following is a 270-amino-acid chain: MASWNSIPLEISYEIVGWIAFASWSISFYPQLILNFRRRSVVGLNFDFVMLNLTKHSSYMIYNVCLYFSPVIQKQYFDTYGDKEMIPVAANDVAFSIHAVVMTAVTLFQIFIYERGPQKVSRLAIGIVVVVWGFAAICFFIALPTHSWLWLISIFNSIQVFMTCVKYIPQAKMNFTRKSTVGWSIGNILLDFTGGLANYLQMVIQSIDQNSWKNFYGNMGKTLLSLISIFFDILFMFQHYVLYPEKKVSKSPETGEESNEPLIDSSHEHV.

Residues 9-75 form the PQ-loop 1 domain; it reads LEISYEIVGW…LYFSPVIQKQ (67 aa). The helical transmembrane segment at 14-34 threads the bilayer; it reads EIVGWIAFASWSISFYPQLIL. Asn52 carries an N-linked (GlcNAc...) asparagine glycan. 3 helical membrane passes run 93 to 113, 123 to 143, and 148 to 168; these read VAFS…IFIY, LAIG…FIAL, and WLWL…VKYI. In terms of domain architecture, PQ-loop 2 spans 151-213; that stretch reads LISIFNSIQV…IQSIDQNSWK (63 aa). The N-linked (GlcNAc...) asparagine glycan is linked to Asn174. The next 2 helical transmembrane spans lie at 180–200 and 223–243; these read TVGW…ANYL and LLSL…YVLY. The segment at 250 to 270 is disordered; that stretch reads KSPETGEESNEPLIDSSHEHV.

This sequence belongs to the cystinosin (TC 2.A.43.1) family.

It localises to the lysosome membrane. Thought to transport cystine out of lysosomes. The protein is Cystinosin homolog of Arabidopsis thaliana (Mouse-ear cress).